A 138-amino-acid chain; its full sequence is MDNVFEFPAGLYGFPDLKRFVVVDVPGAGDVVKQLVSTEDPNVGFTLVFPFAFFPRYSPDIPEEELVAVGAESAEQVLLYAIASVPEDFRKATANLRAPVLFNPFTRKGRQVILGDDRYGIREPLFQGADRIPAEEGR.

This sequence belongs to the FliW family. Interacts with translational regulator CsrA and flagellin(s).

The protein resides in the cytoplasm. Its function is as follows. Acts as an anti-CsrA protein, binds CsrA and prevents it from repressing translation of its target genes, one of which is flagellin. Binds to flagellin and participates in the assembly of the flagellum. This Symbiobacterium thermophilum (strain DSM 24528 / JCM 14929 / IAM 14863 / T) protein is Flagellar assembly factor FliW.